The following is a 133-amino-acid chain: Fluoride-specific ion channel FluC (133 aa).

Helical transmembrane passes span 5 to 25 (VPAT…LGAL), 43 to 63 (VATL…YVVI), 76 to 96 (VIMI…IESL), and 108 to 128 (ISYV…AIVL). Gly-83 and Thr-86 together coordinate Na(+).

This sequence belongs to the fluoride channel Fluc/FEX (TC 1.A.43) family.

The protein resides in the cell inner membrane. It catalyses the reaction fluoride(in) = fluoride(out). Its activity is regulated as follows. Na(+) is not transported, but it plays an essential structural role and its presence is essential for fluoride channel function. Fluoride-specific ion channel. Important for reducing fluoride concentration in the cell, thus reducing its toxicity. The sequence is that of Fluoride-specific ion channel FluC from Saccharophagus degradans (strain 2-40 / ATCC 43961 / DSM 17024).